Here is a 489-residue protein sequence, read N- to C-terminus: Zinc finger protein 772 (489 aa).

The region spanning 27 to 98 is the KRAB domain; it reads VNFEDVFVYF…DWVDMTLAVA (72 aa). 10 consecutive C2H2-type zinc fingers follow at residues 144 to 166, 172 to 194, 266 to 288, 294 to 316, 322 to 344, 350 to 372, 378 to 400, 406 to 428, 434 to 456, and 462 to 484; these read YPCG…QETH, YMCV…QKQH, YKCS…QRVH, YECG…QRIH, YECG…QRVH, YKCS…ESIH, YECS…WSVH, YECI…QRVH, YVCS…HRIH, and YKCS…WKIH.

The protein belongs to the krueppel C2H2-type zinc-finger protein family.

The protein localises to the nucleus. May be involved in transcriptional regulation. In Homo sapiens (Human), this protein is Zinc finger protein 772 (ZNF772).